Here is a 219-residue protein sequence, read N- to C-terminus: 7-cyano-7-deazaguanine synthase (219 aa).

10–20 serves as a coordination point for ATP; sequence FSGGQDSTTCL. 4 residues coordinate Zn(2+): Cys-187, Cys-196, Cys-199, and Cys-202.

This sequence belongs to the QueC family. Homodimer. The cofactor is Zn(2+).

It carries out the reaction 7-carboxy-7-deazaguanine + NH4(+) + ATP = 7-cyano-7-deazaguanine + ADP + phosphate + H2O + H(+). It participates in purine metabolism; 7-cyano-7-deazaguanine biosynthesis. Functionally, catalyzes the ATP-dependent conversion of 7-carboxy-7-deazaguanine (CDG) to 7-cyano-7-deazaguanine (preQ(0)). The protein is 7-cyano-7-deazaguanine synthase of Lysinibacillus sphaericus (strain C3-41).